The following is a 325-amino-acid chain: Putative [LysW]-lysine/[LysW]-ornithine hydrolase (325 aa).

H66 serves as a coordination point for Zn(2+). Residue D68 is part of the active site. Residue D90 participates in Zn(2+) binding. Residue E117 is the Proton acceptor of the active site. Zn(2+) is bound by residues E118, E139, and H297.

Belongs to the peptidase M20A family. LysK subfamily. Zn(2+) is required as a cofactor. Requires Co(2+) as cofactor.

The protein resides in the cytoplasm. It carries out the reaction [amino-group carrier protein]-C-terminal-gamma-(L-lysyl)-L-glutamate + H2O = [amino-group carrier protein]-C-terminal-L-glutamate + L-lysine. The enzyme catalyses [amino-group carrier protein]-C-terminal-gamma-(L-ornithyl)-L-glutamate + H2O = [amino-group carrier protein]-C-terminal-L-glutamate + L-ornithine. The protein operates within amino-acid biosynthesis; L-lysine biosynthesis via AAA pathway; L-lysine from L-alpha-aminoadipate (Thermus route): step 5/5. Its pathway is amino-acid biosynthesis; L-arginine biosynthesis. Catalyzes the release of L-lysine from [LysW]-gamma-L-lysine and the release of L-ornithine from [LysW]-L-ornithine. The sequence is that of Putative [LysW]-lysine/[LysW]-ornithine hydrolase from Pyrococcus horikoshii (strain ATCC 700860 / DSM 12428 / JCM 9974 / NBRC 100139 / OT-3).